A 458-amino-acid chain; its full sequence is UDP-N-acetylmuramoylalanine--D-glutamate ligase (458 aa).

124-130 contributes to the ATP binding site; it reads GSDGKTT.

It belongs to the MurCDEF family.

It is found in the cytoplasm. The catalysed reaction is UDP-N-acetyl-alpha-D-muramoyl-L-alanine + D-glutamate + ATP = UDP-N-acetyl-alpha-D-muramoyl-L-alanyl-D-glutamate + ADP + phosphate + H(+). It functions in the pathway cell wall biogenesis; peptidoglycan biosynthesis. In terms of biological role, cell wall formation. Catalyzes the addition of glutamate to the nucleotide precursor UDP-N-acetylmuramoyl-L-alanine (UMA). This Clostridium botulinum (strain Kyoto / Type A2) protein is UDP-N-acetylmuramoylalanine--D-glutamate ligase.